The primary structure comprises 229 residues: Cytochrome b translational activator protein CBS1, mitochondrial (229 aa).

The N-terminal 25 residues, 1 to 25 (MLRTKVFATTVARISGIRRYIPIRT), are a transit peptide targeting the mitochondrion.

Its subcellular location is the mitochondrion inner membrane. MRNA-specific translational activator of cytochrome b. The cytochrome b (COB) leader RNA may represent the target sequence for CBS1 and CBS2, tethering the COB mRNA to the inner mitochondrial membrane, where cotranslational insertion of cytochrome b into the membrane can occur. The sequence is that of Cytochrome b translational activator protein CBS1, mitochondrial (CBS1) from Saccharomyces cerevisiae (strain ATCC 204508 / S288c) (Baker's yeast).